The sequence spans 251 residues: Coproheme decarboxylase (251 aa).

Fe-coproporphyrin III contacts are provided by residues Arg-133, 147–151 (YPMSK), His-174, Gln-187, and Ser-225. Tyr-147 is a catalytic residue.

It belongs to the ChdC family. Type 1 subfamily. In terms of assembly, homopentamer. Homohexamer in solution. Fe-coproporphyrin III serves as cofactor.

The enzyme catalyses Fe-coproporphyrin III + 2 H2O2 + 2 H(+) = heme b + 2 CO2 + 4 H2O. It carries out the reaction Fe-coproporphyrin III + H2O2 + H(+) = harderoheme III + CO2 + 2 H2O. It catalyses the reaction harderoheme III + H2O2 + H(+) = heme b + CO2 + 2 H2O. The protein operates within porphyrin-containing compound metabolism; protoheme biosynthesis. Involved in coproporphyrin-dependent heme b biosynthesis. Catalyzes the decarboxylation of Fe-coproporphyrin III (coproheme) to heme b (protoheme IX), the last step of the pathway. The reaction occurs in a stepwise manner with a three-propionate intermediate. The polypeptide is Coproheme decarboxylase (Listeria monocytogenes serovar 1/2a (strain ATCC BAA-679 / EGD-e)).